A 148-amino-acid chain; its full sequence is SsrA-binding protein (148 aa).

Belongs to the SmpB family.

The protein localises to the cytoplasm. Required for rescue of stalled ribosomes mediated by trans-translation. Binds to transfer-messenger RNA (tmRNA), required for stable association of tmRNA with ribosomes. tmRNA and SmpB together mimic tRNA shape, replacing the anticodon stem-loop with SmpB. tmRNA is encoded by the ssrA gene; the 2 termini fold to resemble tRNA(Ala) and it encodes a 'tag peptide', a short internal open reading frame. During trans-translation Ala-aminoacylated tmRNA acts like a tRNA, entering the A-site of stalled ribosomes, displacing the stalled mRNA. The ribosome then switches to translate the ORF on the tmRNA; the nascent peptide is terminated with the 'tag peptide' encoded by the tmRNA and targeted for degradation. The ribosome is freed to recommence translation, which seems to be the essential function of trans-translation. The chain is SsrA-binding protein from Burkholderia ambifaria (strain ATCC BAA-244 / DSM 16087 / CCUG 44356 / LMG 19182 / AMMD) (Burkholderia cepacia (strain AMMD)).